Reading from the N-terminus, the 396-residue chain is Elongation factor Tu (396 aa).

In terms of domain architecture, tr-type G spans 10–205 (KSHANIGTIG…AVDEYIPTPE (196 aa)). The tract at residues 19–26 (GHVDHGKT) is G1. 19 to 26 (GHVDHGKT) lines the GTP pocket. A Mg(2+)-binding site is contributed by Thr26. Residues 61-65 (GITIS) are G2. The interval 82 to 85 (DCPG) is G3. Residues 82–86 (DCPGH) and 137–140 (NKCD) each bind GTP. The interval 137-140 (NKCD) is G4. The interval 175–177 (SAL) is G5.

Belongs to the TRAFAC class translation factor GTPase superfamily. Classic translation factor GTPase family. EF-Tu/EF-1A subfamily. Monomer.

It is found in the cytoplasm. The enzyme catalyses GTP + H2O = GDP + phosphate + H(+). Its function is as follows. GTP hydrolase that promotes the GTP-dependent binding of aminoacyl-tRNA to the A-site of ribosomes during protein biosynthesis. The sequence is that of Elongation factor Tu from Bacillus pumilus (strain SAFR-032).